A 406-amino-acid polypeptide reads, in one-letter code: Imidazolonepropionase (406 aa).

Residues histidine 72 and histidine 74 each coordinate Fe(3+). Histidine 72 and histidine 74 together coordinate Zn(2+). Residues arginine 81, tyrosine 144, and histidine 177 each contribute to the 4-imidazolone-5-propanoate site. Tyrosine 144 provides a ligand contact to N-formimidoyl-L-glutamate. Histidine 242 is a binding site for Fe(3+). Histidine 242 serves as a coordination point for Zn(2+). Residue glutamine 245 participates in 4-imidazolone-5-propanoate binding. Aspartate 317 provides a ligand contact to Fe(3+). Zn(2+) is bound at residue aspartate 317. Residues asparagine 319 and glycine 321 each contribute to the N-formimidoyl-L-glutamate site. Threonine 322 lines the 4-imidazolone-5-propanoate pocket.

Belongs to the metallo-dependent hydrolases superfamily. HutI family. The cofactor is Zn(2+). Fe(3+) serves as cofactor.

The protein localises to the cytoplasm. It carries out the reaction 4-imidazolone-5-propanoate + H2O = N-formimidoyl-L-glutamate. It participates in amino-acid degradation; L-histidine degradation into L-glutamate; N-formimidoyl-L-glutamate from L-histidine: step 3/3. Catalyzes the hydrolytic cleavage of the carbon-nitrogen bond in imidazolone-5-propanoate to yield N-formimidoyl-L-glutamate. It is the third step in the universal histidine degradation pathway. This is Imidazolonepropionase from Yersinia pestis bv. Antiqua (strain Antiqua).